The chain runs to 437 residues: Enolase (437 aa).

Residue Gln-162 participates in (2R)-2-phosphoglycerate binding. Glu-204 functions as the Proton donor in the catalytic mechanism. Mg(2+) is bound by residues Asp-251, Glu-297, and Asp-324. 4 residues coordinate (2R)-2-phosphoglycerate: Lys-349, Arg-378, Ser-379, and Lys-400. The Proton acceptor role is filled by Lys-349.

It belongs to the enolase family. It depends on Mg(2+) as a cofactor.

It localises to the cytoplasm. The protein resides in the secreted. It is found in the cell surface. The catalysed reaction is (2R)-2-phosphoglycerate = phosphoenolpyruvate + H2O. It functions in the pathway carbohydrate degradation; glycolysis; pyruvate from D-glyceraldehyde 3-phosphate: step 4/5. Catalyzes the reversible conversion of 2-phosphoglycerate (2-PG) into phosphoenolpyruvate (PEP). It is essential for the degradation of carbohydrates via glycolysis. The polypeptide is Enolase (Chlorobium phaeovibrioides (strain DSM 265 / 1930) (Prosthecochloris vibrioformis (strain DSM 265))).